Consider the following 222-residue polypeptide: Fibrillarin-like rRNA/tRNA 2'-O-methyltransferase (222 aa).

S-adenosyl-L-methionine is bound by residues Thr-86–Thr-87, Glu-104–Val-105, Asp-129–Ala-130, and Asp-149–Gln-152.

This sequence belongs to the methyltransferase superfamily. Fibrillarin family. In terms of assembly, interacts with nop5. Component of box C/D small ribonucleoprotein (sRNP) particles that contain rpl7ae, FlpA and nop5, plus a guide RNA.

Involved in pre-rRNA and tRNA processing. Utilizes the methyl donor S-adenosyl-L-methionine to catalyze the site-specific 2'-hydroxyl methylation of ribose moieties in rRNA and tRNA. Site specificity is provided by a guide RNA that base pairs with the substrate. Methylation occurs at a characteristic distance from the sequence involved in base pairing with the guide RNA. The chain is Fibrillarin-like rRNA/tRNA 2'-O-methyltransferase from Thermoplasma volcanium (strain ATCC 51530 / DSM 4299 / JCM 9571 / NBRC 15438 / GSS1).